We begin with the raw amino-acid sequence, 96 residues long: U-stichotoxin-Hau2b (96 aa).

The first 18 residues, 1–18, serve as a signal peptide directing secretion; that stretch reads MKPIFIVALLFSTCLVNA. Propeptides lie at residues 19–29 and 30–33; these read KPSIDDAEMKR and EPKP. 2 cysteine pairs are disulfide-bonded: cysteine 40/cysteine 51 and cysteine 43/cysteine 58. 2 consecutive propeptides follow at residues 62–64 and 65–68; these read RKR and EPKP. Intrachain disulfides connect cysteine 75-cysteine 86 and cysteine 78-cysteine 93.

The protein belongs to the sea anemone BBH family.

It is found in the secreted. The protein localises to the nematocyst. Neurotoxin that paralyzes freshwater crabs at high concentration. The protein is U-stichotoxin-Hau2b of Heteractis aurora (Banded sea anemone).